The following is a 734-amino-acid chain: Photosystem I P700 chlorophyll a apoprotein A2 (734 aa).

8 helical membrane-spanning segments follow: residues 46-69 (IFASHFGQLAIIFLWTSGNLFHVA), 135-158 (LYNGALFLVILSSISLIAGWLHLQ), 175-199 (LNHHLSGLFGVSSLAWTGHLVHVAI), 273-291 (IAHHHLAIAVVFIIAGHMY), 330-353 (LHFQLGLALASLGVITSLVAQHMY), 369-395 (AALYTHHQYIAGFIMTGAFAHGAIFFI), 417-439 (AIISHLSWASLFLGFHTLGLYVH), and 517-535 (FLVHHAIALGLHTTTLILV). Residues Cys-559 and Cys-568 each coordinate [4Fe-4S] cluster. 2 consecutive transmembrane segments (helical) span residues 575-596 (AFYLAVFWMLNTIGWVTFYWHW) and 643-665 (LSVWAWMFLFGHLVWATGFMFLI). Chlorophyll a is bound by residues His-654, Met-662, and Tyr-670. Residue Trp-671 participates in phylloquinone binding. A helical transmembrane segment spans residues 707–727 (LVGLAHFSVGYIFTYAAFLIA).

The protein belongs to the PsaA/PsaB family. As to quaternary structure, the PsaA/B heterodimer binds the P700 chlorophyll special pair and subsequent electron acceptors. PSI consists of a core antenna complex that captures photons, and an electron transfer chain that converts photonic excitation into a charge separation. The eukaryotic PSI reaction center is composed of at least 11 subunits. P700 is a chlorophyll a/chlorophyll a' dimer, A0 is one or more chlorophyll a, A1 is one or both phylloquinones and FX is a shared 4Fe-4S iron-sulfur center. is required as a cofactor.

The protein localises to the plastid. Its subcellular location is the chloroplast thylakoid membrane. It carries out the reaction reduced [plastocyanin] + hnu + oxidized [2Fe-2S]-[ferredoxin] = oxidized [plastocyanin] + reduced [2Fe-2S]-[ferredoxin]. Functionally, psaA and PsaB bind P700, the primary electron donor of photosystem I (PSI), as well as the electron acceptors A0, A1 and FX. PSI is a plastocyanin-ferredoxin oxidoreductase, converting photonic excitation into a charge separation, which transfers an electron from the donor P700 chlorophyll pair to the spectroscopically characterized acceptors A0, A1, FX, FA and FB in turn. Oxidized P700 is reduced on the lumenal side of the thylakoid membrane by plastocyanin. This is Photosystem I P700 chlorophyll a apoprotein A2 from Marchantia polymorpha (Common liverwort).